Reading from the N-terminus, the 331-residue chain is Ferredoxin--NADP reductase (331 aa).

The FAD site is built by Glu-34, Gln-42, Tyr-47, Val-87, Phe-120, Asp-285, and Thr-325.

This sequence belongs to the ferredoxin--NADP reductase type 2 family. Homodimer. Requires FAD as cofactor.

It catalyses the reaction 2 reduced [2Fe-2S]-[ferredoxin] + NADP(+) + H(+) = 2 oxidized [2Fe-2S]-[ferredoxin] + NADPH. The sequence is that of Ferredoxin--NADP reductase from Levilactobacillus brevis (strain ATCC 367 / BCRC 12310 / CIP 105137 / JCM 1170 / LMG 11437 / NCIMB 947 / NCTC 947) (Lactobacillus brevis).